Reading from the N-terminus, the 432-residue chain is UDP-N-acetylmuramate--L-alanine ligase (432 aa).

Residue 109 to 115 (GAHGKST) coordinates ATP.

It belongs to the MurCDEF family.

The protein localises to the cytoplasm. The catalysed reaction is UDP-N-acetyl-alpha-D-muramate + L-alanine + ATP = UDP-N-acetyl-alpha-D-muramoyl-L-alanine + ADP + phosphate + H(+). The protein operates within cell wall biogenesis; peptidoglycan biosynthesis. Its function is as follows. Cell wall formation. This chain is UDP-N-acetylmuramate--L-alanine ligase, found in Campylobacter jejuni subsp. jejuni serotype O:2 (strain ATCC 700819 / NCTC 11168).